A 1486-amino-acid chain; its full sequence is Chromosome partition protein MukB (1486 aa).

34 to 41 (GGNGAGKS) is a binding site for ATP. Coiled coils occupy residues 326 to 418 (LEAD…QYNQ), 444 to 480 (LETF…QAYQ), and 509 to 603 (RHLA…RAPV). The tract at residues 666 to 783 (PGGSEDQRLN…EVPLFGRAAR (118 aa)) is flexible hinge. Coiled coils occupy residues 835–923 (EAEI…AKLE), 977–1115 (EMLS…TAKA), and 1209–1266 (VEAI…QNVS).

This sequence belongs to the SMC family. MukB subfamily. Homodimerization via its hinge domain. Binds to DNA via its C-terminal region. Interacts, and probably forms a ternary complex, with MukE and MukF via its C-terminal region. The complex formation is stimulated by calcium or magnesium. Interacts with tubulin-related protein FtsZ.

The protein resides in the cytoplasm. Its subcellular location is the nucleoid. Its function is as follows. Plays a central role in chromosome condensation, segregation and cell cycle progression. Functions as a homodimer, which is essential for chromosome partition. Involved in negative DNA supercoiling in vivo, and by this means organize and compact chromosomes. May achieve or facilitate chromosome segregation by condensation DNA from both sides of a centrally located replisome during cell division. In Escherichia coli O6:H1 (strain CFT073 / ATCC 700928 / UPEC), this protein is Chromosome partition protein MukB.